The following is a 99-amino-acid chain: Putative pterin-4-alpha-carbinolamine dehydratase (99 aa).

It belongs to the pterin-4-alpha-carbinolamine dehydratase family.

The enzyme catalyses (4aS,6R)-4a-hydroxy-L-erythro-5,6,7,8-tetrahydrobiopterin = (6R)-L-erythro-6,7-dihydrobiopterin + H2O. The protein is Putative pterin-4-alpha-carbinolamine dehydratase of Synechococcus sp. (strain CC9311).